Consider the following 468-residue polypeptide: tRNA (guanine(37)-N(1))-methyltransferase 1 (468 aa).

S-adenosyl-L-methionine contacts are provided by residues H207, 245 to 246 (DL), and 273 to 274 (DA). The tract at residues 301 to 348 (KEAAVSRGGETNSSGEEIRESNASINEPLGANKKPSGTTKTENGVGKD) is disordered. Residues 309–325 (GETNSSGEEIRESNASI) show a composition bias toward polar residues. Residue N380 coordinates S-adenosyl-L-methionine.

This sequence belongs to the class I-like SAM-binding methyltransferase superfamily. TRM5/TYW2 family. Monomer.

It is found in the mitochondrion matrix. Its subcellular location is the nucleus. The protein resides in the cytoplasm. The enzyme catalyses guanosine(37) in tRNA + S-adenosyl-L-methionine = N(1)-methylguanosine(37) in tRNA + S-adenosyl-L-homocysteine + H(+). Specifically methylates the N1 position of guanosine-37 in various cytoplasmic and mitochondrial tRNAs. Methylation is not dependent on the nature of the nucleoside 5' of the target nucleoside. This is the first step in the biosynthesis of wybutosine (yW), a modified base adjacent to the anticodon of tRNAs and required for accurate decoding. This Arabidopsis thaliana (Mouse-ear cress) protein is tRNA (guanine(37)-N(1))-methyltransferase 1.